We begin with the raw amino-acid sequence, 716 residues long: Radial spoke head protein 4 homolog A (716 aa).

4 disordered regions span residues 1-164 (MEDS…CGRR), 375-410 (EGED…PKSF), 506-526 (GEEE…FEEN), and 697-716 (LLAA…DDYD). The segment covering 8–25 (KQEKENQEELGETRRPWE) has biased composition (basic and acidic residues). 3 stretches are compositionally biased toward low complexity: residues 29 to 42 (AASP…SSEP), 54 to 66 (QSRS…PQSR), and 80 to 100 (SSPA…LAPA). A compositionally biased stretch (polar residues) spans 140–156 (HHTSQSEGNTFQQSQQP). Over residues 375-389 (EGEDEEEVEEEDVAE) the composition is skewed to acidic residues. The residue at position 396 (Ser396) is a Phosphoserine. Composition is skewed to acidic residues over residues 506-516 (GEEEGEEEEEA) and 701-716 (ENEE…DDYD).

This sequence belongs to the flagellar radial spoke RSP4/6 family. In terms of assembly, interacts with RSPH6A. In terms of tissue distribution, expressed in trachea, lungs, and testes. Very strong expression is detected in nasal brushings.

Its subcellular location is the cytoplasm. The protein resides in the cytoskeleton. It localises to the cilium axoneme. The protein localises to the cell projection. It is found in the cilium. Its function is as follows. Component of the axonemal radial spoke head which plays an important role in ciliary motility. Essential for triplet radial spokes (RS1, RS2 and RS3) head assembly in the motile cilia. The polypeptide is Radial spoke head protein 4 homolog A (RSPH4A) (Homo sapiens (Human)).